The following is a 160-amino-acid chain: SsrA-binding protein (160 aa).

Belongs to the SmpB family.

It localises to the cytoplasm. Its function is as follows. Required for rescue of stalled ribosomes mediated by trans-translation. Binds to transfer-messenger RNA (tmRNA), required for stable association of tmRNA with ribosomes. tmRNA and SmpB together mimic tRNA shape, replacing the anticodon stem-loop with SmpB. tmRNA is encoded by the ssrA gene; the 2 termini fold to resemble tRNA(Ala) and it encodes a 'tag peptide', a short internal open reading frame. During trans-translation Ala-aminoacylated tmRNA acts like a tRNA, entering the A-site of stalled ribosomes, displacing the stalled mRNA. The ribosome then switches to translate the ORF on the tmRNA; the nascent peptide is terminated with the 'tag peptide' encoded by the tmRNA and targeted for degradation. The ribosome is freed to recommence translation, which seems to be the essential function of trans-translation. This is SsrA-binding protein from Citrobacter koseri (strain ATCC BAA-895 / CDC 4225-83 / SGSC4696).